Here is a 557-residue protein sequence, read N- to C-terminus: DNA ligase (557 aa).

Residue E251 coordinates ATP. K253 serves as the catalytic N6-AMP-lysine intermediate. ATP-binding residues include R258, R273, E303, F342, R418, and K424.

It belongs to the ATP-dependent DNA ligase family. It depends on Mg(2+) as a cofactor.

The catalysed reaction is ATP + (deoxyribonucleotide)n-3'-hydroxyl + 5'-phospho-(deoxyribonucleotide)m = (deoxyribonucleotide)n+m + AMP + diphosphate.. DNA ligase that seals nicks in double-stranded DNA during DNA replication, DNA recombination and DNA repair. This is DNA ligase from Methanosphaera stadtmanae (strain ATCC 43021 / DSM 3091 / JCM 11832 / MCB-3).